The primary structure comprises 131 residues: MSLNQKALNSYVYTLAFSSLSFGLIFGLYLFVYSGFMAIALVTIAIIAFYALITYLVFAAPLQVWLRRRRRKFSLINFLIYIAVAFSAVFLFWFVDYPPNALTMFRSFEYYIMSIVAAFIYWFWDSIFLRN.

Transmembrane regions (helical) follow at residues 12–32, 38–58, 75–95, and 108–128; these read VYTLAFSSLSFGLIFGLYLFV, AIALVTIAIIAFYALITYLVF, LINFLIYIAVAFSAVFLFWFV, and FEYYIMSIVAAFIYWFWDSIF.

This sequence belongs to the UPF0715 family.

It is found in the cell membrane. The chain is SPbeta prophage-derived UPF0715 membrane protein YopD (yopD) from Bacillus subtilis (strain 168).